The primary structure comprises 299 residues: ATP phosphoribosyltransferase (299 aa).

This sequence belongs to the ATP phosphoribosyltransferase family. Long subfamily. Equilibrium between an active dimeric form, an inactive hexameric form and higher aggregates. Interconversion between the various forms is largely reversible and is influenced by the natural substrates and inhibitors of the enzyme. The cofactor is Mg(2+).

It localises to the cytoplasm. It catalyses the reaction 1-(5-phospho-beta-D-ribosyl)-ATP + diphosphate = 5-phospho-alpha-D-ribose 1-diphosphate + ATP. The protein operates within amino-acid biosynthesis; L-histidine biosynthesis; L-histidine from 5-phospho-alpha-D-ribose 1-diphosphate: step 1/9. Feedback inhibited by histidine. In terms of biological role, catalyzes the condensation of ATP and 5-phosphoribose 1-diphosphate to form N'-(5'-phosphoribosyl)-ATP (PR-ATP). Has a crucial role in the pathway because the rate of histidine biosynthesis seems to be controlled primarily by regulation of HisG enzymatic activity. This chain is ATP phosphoribosyltransferase (hisG), found in Buchnera aphidicola subsp. Schizaphis graminum (strain Sg).